A 290-amino-acid chain; its full sequence is MAAGKEIRTKIKSVENTRKITKAMEMVAASKMRKAQDRMKAARPYAEKIARVATHLAYAHPEYKHPFVIARDDVKRVGLIIVTSDKGLCGGLNTNAFRVVVNQMKQWEAAGVGIDVTAIGNKGLGFMQRLGANVVSQLTGVGDTPHMDKLIGPVKIMLDAYLEGRIDALYLVYNRFINTMKQEPTLTQLLPLAKMESTEEASLKTHWDYIYEPDAKPVVDAMLMRYIESLVYQGVAENIASEQSARMVAMKAASDNAKNVIGELKLVYNKTRQAAITKELSEIVAGAAAV.

The protein belongs to the ATPase gamma chain family. As to quaternary structure, F-type ATPases have 2 components, CF(1) - the catalytic core - and CF(0) - the membrane proton channel. CF(1) has five subunits: alpha(3), beta(3), gamma(1), delta(1), epsilon(1). CF(0) has three main subunits: a, b and c.

Its subcellular location is the cell inner membrane. Functionally, produces ATP from ADP in the presence of a proton gradient across the membrane. The gamma chain is believed to be important in regulating ATPase activity and the flow of protons through the CF(0) complex. The protein is ATP synthase gamma chain of Thiobacillus denitrificans (strain ATCC 25259 / T1).